We begin with the raw amino-acid sequence, 103 residues long: Truncated secreted TNF-receptor-like protein A53 (103 aa).

One copy of the TNFR-Cys 1 repeat lies at 36-73 (SCDKGEYLDKRHNQCCNRCPPGEFAKVRCNGNDNTKCE). 3 disulfides stabilise this stretch: Cys-37/Cys-50, Cys-51/Cys-64, and Cys-54/Cys-72. One copy of the TNFR-Cys 2; truncated repeat lies at 74–103 (RCPPHTYTTIPIILMDVINVENAQQDHLIR).

The protein belongs to the poxviridae A53R protein family.

The chain is Truncated secreted TNF-receptor-like protein A53 from Vaccinia virus (strain Copenhagen) (VACV).